The following is a 265-amino-acid chain: UPF0354 protein ABC2771 (265 aa).

Belongs to the UPF0354 family.

This is UPF0354 protein ABC2771 from Shouchella clausii (strain KSM-K16) (Alkalihalobacillus clausii).